Reading from the N-terminus, the 203-residue chain is Glycerol-3-phosphate acyltransferase (203 aa).

6 helical membrane-spanning segments follow: residues 1–21 (MPAWLSALLAALGGYLLGSIP), 52–72 (VGKGPALLVLLVDAAKGAAAV), 73–93 (ALGSALGSPWWVVVAALGAVI), 115–135 (ILLAMAWPVALATFGVWLLGI), 140–160 (IVSFSSLLAAVAAPLLMWALG), and 161–181 (QPLPYLLFALAGGVYVIAAHR).

Belongs to the PlsY family. Probably interacts with PlsX.

Its subcellular location is the cell inner membrane. The enzyme catalyses an acyl phosphate + sn-glycerol 3-phosphate = a 1-acyl-sn-glycero-3-phosphate + phosphate. Its pathway is lipid metabolism; phospholipid metabolism. In terms of biological role, catalyzes the transfer of an acyl group from acyl-phosphate (acyl-PO(4)) to glycerol-3-phosphate (G3P) to form lysophosphatidic acid (LPA). This enzyme utilizes acyl-phosphate as fatty acyl donor, but not acyl-CoA or acyl-ACP. In Synechococcus sp. (strain JA-3-3Ab) (Cyanobacteria bacterium Yellowstone A-Prime), this protein is Glycerol-3-phosphate acyltransferase.